The primary structure comprises 625 residues: RecQ-mediated genome instability protein 1 (625 aa).

Methionine 1 carries the N-acetylmethionine modification. A Phosphoserine modification is found at serine 225. A disordered region spans residues leucine 257–glutamine 282. Residues serine 284 and serine 292 each carry the phosphoserine modification. Glycyl lysine isopeptide (Lys-Gly) (interchain with G-Cter in SUMO2) cross-links involve residues lysine 334, lysine 387, and lysine 426.

This sequence belongs to the RMI1 family. As to quaternary structure, component of the RMI complex, containing at least TOP3A, RMI1 and RMI2. The RMI complex interacts with BLM. Directly interacts with RMI2 and TOP3A. May bind DHJ. Interacts (via N-terminal region) with BLM; the interaction is direct.

It is found in the nucleus. Its function is as follows. Essential component of the RMI complex, a complex that plays an important role in the processing of homologous recombination intermediates to limit DNA crossover formation in cells. Promotes TOP3A binding to double Holliday junctions (DHJ) and hence stimulates TOP3A-mediated dissolution. Required for BLM phosphorylation during mitosis. Within the BLM complex, required for BLM and TOP3A stability. This Homo sapiens (Human) protein is RecQ-mediated genome instability protein 1 (RMI1).